Reading from the N-terminus, the 74-residue chain is Exodeoxyribonuclease 7 small subunit (74 aa).

Belongs to the XseB family. Heterooligomer composed of large and small subunits.

The protein localises to the cytoplasm. It carries out the reaction Exonucleolytic cleavage in either 5'- to 3'- or 3'- to 5'-direction to yield nucleoside 5'-phosphates.. Bidirectionally degrades single-stranded DNA into large acid-insoluble oligonucleotides, which are then degraded further into small acid-soluble oligonucleotides. The sequence is that of Exodeoxyribonuclease 7 small subunit from Ruthia magnifica subsp. Calyptogena magnifica.